The following is a 393-amino-acid chain: S-adenosylmethionine synthase 1 (393 aa).

Glutamate 9 serves as a coordination point for Mg(2+). Histidine 15 contacts ATP. Glutamate 43 lines the K(+) pocket. Residues glutamate 56 and glutamine 99 each coordinate L-methionine. Position 114 is an S-nitrosocysteine (cysteine 114). Residues 167-169, 235-238, aspartate 246, 252-253, alanine 269, lysine 273, and lysine 277 contribute to the ATP site; these read DGK, SGRF, and RK. Aspartate 246 is a binding site for L-methionine. Lysine 277 is a binding site for L-methionine.

The protein belongs to the AdoMet synthase family. Homotetramer. Interacts with GRF3. Mn(2+) is required as a cofactor. Mg(2+) serves as cofactor. Requires Co(2+) as cofactor. The cofactor is K(+). Post-translationally, S-nitrosylated in the presence of NO. The inhibition of SAM1 activity by S-nitrosylation could contribute to the cross-talk between ethylene and NO signaling. As to expression, highly expressed in stems and roots.

It localises to the cytoplasm. It carries out the reaction L-methionine + ATP + H2O = S-adenosyl-L-methionine + phosphate + diphosphate. It functions in the pathway amino-acid biosynthesis; S-adenosyl-L-methionine biosynthesis; S-adenosyl-L-methionine from L-methionine: step 1/1. Reversibly inhibited by NO. Inhibited by 5,5'-dithiobis-2-nitrobenzoic acid (DTNB) and N-ethylmaleimide (NEM) (in vitro). Its function is as follows. Catalyzes the formation of S-adenosylmethionine from methionine and ATP. The reaction comprises two steps that are both catalyzed by the same enzyme: formation of S-adenosylmethionine (AdoMet) and triphosphate, and subsequent hydrolysis of the triphosphate. The sequence is that of S-adenosylmethionine synthase 1 (SAM1) from Arabidopsis thaliana (Mouse-ear cress).